We begin with the raw amino-acid sequence, 230 residues long: Urease accessory protein UreF (230 aa).

The protein belongs to the UreF family. As to quaternary structure, ureD, UreF and UreG form a complex that acts as a GTP-hydrolysis-dependent molecular chaperone, activating the urease apoprotein by helping to assemble the nickel containing metallocenter of UreC. The UreE protein probably delivers the nickel.

It localises to the cytoplasm. Its function is as follows. Required for maturation of urease via the functional incorporation of the urease nickel metallocenter. This is Urease accessory protein UreF from Cupriavidus pinatubonensis (strain JMP 134 / LMG 1197) (Cupriavidus necator (strain JMP 134)).